The chain runs to 340 residues: Sulfotransferase ppzF (340 aa).

Its pathway is secondary metabolite biosynthesis. In terms of biological role, sulfotransferase; part of the gene cluster that mediates the biosynthesis of pyrrolopyrazines, secondary metabolites showing insecticidal activity. The role of ppzF within the pathway has still to be determined. The single multifunctional NRPS ppzA is sufficient to produce peramine via condensation of 1-pyrroline-5-carboxylate and arginine, N-methylation of the alpha-amino group of arginine and reduction of the thioester and the cyclization to form an iminium ion resulting in release from the peptide synthetase. Deprotonation of this intermediate and oxidation of the pyrroline ring would give rise to peramine. In Epichloe species that produce only peramine, the peramine synthetase gene is not localized in a gene cluster, in contrast to Metarhizium species that contain additional pyrrolopyrazine biosynthesis genes. The 2-oxoglutarate-Fe(II) type oxidoreductase ppzC hydroxylates peramine to yield the newly identified compound 8-hydroxyperamine whereas ppzD converts L-proline into trans-4-hydroxy-L-proline, a precursor of peramine biosynthesis. This is Sulfotransferase ppzF from Metarhizium majus (strain ARSEF 297).